The chain runs to 484 residues: CUGBP Elav-like family member 2 (484 aa).

2 necessary for nuclear export regions span residues 1–89 (MNGA…PGMH) and 90–178 (HPIQ…EGCS). 3 RRM domains span residues 16–99 (IKTF…PADS), 108–188 (RKLF…FADT), and 399–477 (ANLF…LKRS). Residues 188–240 (TQKDKEQRRLQQQLAQQMQQLNTATWGNLTGLGGLTPQYLALLQQATSSSNLG) are necessary for splicing activity. The segment at 347–399 (GLTNGTAGTMDALTQAYSGIQQYAAAALPTLYSQSLLQQQSAAGSQKEGPEGA) is necessary for nuclear localization. A necessary for nuclear localization and splicing activity region spans residues 426–484 (ISAKVFIDKQTNLSKCFGFVSYDNPVSAQAAIQAMNGFQIGMKRLKVQLKRSKNDSKPY).

The protein belongs to the CELF/BRUNOL family. Expressed in heart.

Its subcellular location is the nucleus. The protein localises to the cytoplasm. RNA-binding protein implicated in the regulation of several post-transcriptional events. May be involved in mRNA translation repression and stability. Mediates exon inclusion in TNNT2 pre-mRNA. In Gallus gallus (Chicken), this protein is CUGBP Elav-like family member 2 (CELF2).